Here is a 97-residue protein sequence, read N- to C-terminus: YcgL domain-containing protein PA1295 (97 aa).

Residues 3–87 (RICSVYKSPR…GEEEYIEHLP (85 aa)) enclose the YcgL domain.

The sequence is that of YcgL domain-containing protein PA1295 from Pseudomonas aeruginosa (strain ATCC 15692 / DSM 22644 / CIP 104116 / JCM 14847 / LMG 12228 / 1C / PRS 101 / PAO1).